The following is a 1007-amino-acid chain: Exportin-7 (1007 aa).

It belongs to the exportin family.

Its subcellular location is the nucleus. The protein resides in the cytoplasm. It is found in the nuclear pore complex. Its function is as follows. Mediates the nuclear export of proteins (cargos) with broad substrate specificity. This chain is Exportin-7 (xpo7), found in Dictyostelium discoideum (Social amoeba).